Consider the following 462-residue polypeptide: Putative F-box protein At1g12855 (462 aa).

Positions 1-22 (MESREDSFISKEKKSTMKKEKQ) are enriched in basic and acidic residues. The disordered stretch occupies residues 1–59 (MESREDSFISKEKKSTMKKEKQAIASQRNRRRVIKNRGNGKRLIASLSQRKRRRIPRGR). Residues 28-40 (RNRRRVIKNRGNG) show a composition bias toward basic residues. Residues 65–110 (VFAPSSLPNDVVEEIFLRLPVKAIIQLKSLSKQWRSTIESRSFEER) enclose the F-box domain.

The protein is Putative F-box protein At1g12855 of Arabidopsis thaliana (Mouse-ear cress).